The sequence spans 311 residues: Phosphoglycerate mutase 2 (311 aa).

Substrate contacts are provided by residues 16–23 (RHGQSELN), 29–30 (CG), R73, 126–129 (ERHY), K137, 153–154 (RR), and 243–244 (GS). The Tele-phosphohistidine intermediate role is filled by H17. The active-site Proton donor/acceptor is E126.

The protein belongs to the phosphoglycerate mutase family. BPG-dependent PGAM subfamily.

It is found in the cytoplasm. It catalyses the reaction (2R)-2-phosphoglycerate = (2R)-3-phosphoglycerate. It participates in carbohydrate degradation; glycolysis; pyruvate from D-glyceraldehyde 3-phosphate: step 3/5. Functionally, could be non-functional. The polypeptide is Phosphoglycerate mutase 2 (GPM2) (Saccharomyces cerevisiae (strain ATCC 204508 / S288c) (Baker's yeast)).